A 507-amino-acid chain; its full sequence is ATP synthase subunit alpha (507 aa).

Glycine 168–threonine 175 provides a ligand contact to ATP.

This sequence belongs to the ATPase alpha/beta chains family. In terms of assembly, F-type ATPases have 2 components, CF(1) - the catalytic core - and CF(0) - the membrane proton channel. CF(1) has five subunits: alpha(3), beta(3), gamma(1), delta(1), epsilon(1). CF(0) has three main subunits: a(1), b(2) and c(9-12). The alpha and beta chains form an alternating ring which encloses part of the gamma chain. CF(1) is attached to CF(0) by a central stalk formed by the gamma and epsilon chains, while a peripheral stalk is formed by the delta and b chains.

Its subcellular location is the cell membrane. The enzyme catalyses ATP + H2O + 4 H(+)(in) = ADP + phosphate + 5 H(+)(out). Functionally, produces ATP from ADP in the presence of a proton gradient across the membrane. The alpha chain is a regulatory subunit. In Mesomycoplasma hyopneumoniae (strain J / ATCC 25934 / NCTC 10110) (Mycoplasma hyopneumoniae), this protein is ATP synthase subunit alpha.